We begin with the raw amino-acid sequence, 1088 residues long: Pathogenesis-related homeodomain protein (1088 aa).

A run of 8 repeats spans residues 140 to 152 (INMG…PEEV), 173 to 199 (NSYQ…RSDD), 205 to 239 (GLVE…KVQT), 240 to 274 (GLEQ…KVQN), 283 to 295 (INME…PEQV), 316 to 342 (NSDQ…QSDD), 348 to 382 (GFKE…KVQT), and 383 to 417 (GLEQ…KVQD). A 2 X 13 AA repeats region spans residues 140-295 (INMGQKETMP…EQKETIPEQV (156 aa)). The interval 173–342 (NSYQSGLPPE…HAQFGHQSDD (170 aa)) is 2 X 27 AA approximate repeats. Positions 205 to 274 (GLVELVIGQK…SRGRPRKVQN (70 aa)) are 2 X 35 AA approximate tandem repeats (type C). The tract at residues 220 to 282 (PSQLVETGKR…QNSPTSFLEN (63 aa)) is disordered. DNA-binding regions (a.T hook) lie at residues 226 to 236 (TGKRGRGRPRK) and 261 to 271 (TGKRSRGRPRK). The segment covering 272 to 282 (VQNSPTSFLEN) has biased composition (polar residues). Polar residues predominate over residues 303 to 320 (SLTIPTDNQSRTYNSDQS). Disordered stretches follow at residues 303 to 343 (SLTI…SDDT) and 363 to 484 (PSQL…RMEE). A 2 X 35 AA approximate tandem repeats (type C) region spans residues 348–417 (GFKELVIGQE…SRGRPRKVQD (70 aa)). 2 DNA-binding regions (a.T hook) span residues 369–379 (AGKRGRGRPRK) and 404–414 (TGKRSRGRPRK). The PHD-type zinc-finger motif lies at 578–635 (DIFCAKCGSKDVTLSNDIILCDGACDRGFHQFCLDPPLLKEYIPPDDEGWLCPGCECK). Disordered stretches follow at residues 667–810 (AASG…PLYP) and 851–901 (EEYG…ARES). A 4-1 repeat occupies 678–693 (GLPSDDSEDDDYDPGG). Residues 678–744 (GLPSDDSEDD…SEDDEYDPSG (67 aa)) are 2 X 16 AA Asp/Glu-rich (acidic) repeats. Residues 705 to 718 (SSTDESDYQSESDD) show a composition bias toward acidic residues. A 4-2 repeat occupies 729-744 (GLPSDDSEDDEYDPSG). 2 stretches are compositionally biased toward basic and acidic residues: residues 788–802 (DHVR…HPEQ) and 874–901 (NNSD…ARES). Residues 935-994 (KSTSKTLHGEHATQRLLQSFKENQYPQRAVKESLAAELALSVRQVSNWFNNRRWSFRHSS) constitute a DNA-binding region (homeobox).

Belongs to the PHD-associated homeobox family.

The protein resides in the nucleus. Its function is as follows. Specifically binds to the fungal elicitor-responsive DNA element, 5'-CTAATTGTTTA-3', of the gene PR2 promoter. The sequence is that of Pathogenesis-related homeodomain protein (PRH) from Petroselinum crispum (Parsley).